Here is a 421-residue protein sequence, read N- to C-terminus: ATP-dependent RNA helicase RhlB (421 aa).

A Q motif motif is present at residues 9-37 (QKFSDFALHAKVIEALENKGFHYCTPIQA). Residues 40–219 (LPLTLAGRDV…FEQMNNAEYV (180 aa)) form the Helicase ATP-binding domain. 53 to 60 (AQTGTGKT) provides a ligand contact to ATP. Positions 165-168 (DEAD) match the DEAD box motif. The Helicase C-terminal domain occupies 245 to 390 (RLLQTLIEEE…QSKYNPDALL (146 aa)). Residues 386–421 (PDALLSELPPPKRLTRARSGNGPRRTGAPRNRRRPG) are disordered. Over residues 405-414 (GNGPRRTGAP) the composition is skewed to low complexity.

The protein belongs to the DEAD box helicase family. RhlB subfamily. Component of the RNA degradosome, which is a multiprotein complex involved in RNA processing and mRNA degradation.

It is found in the cytoplasm. The catalysed reaction is ATP + H2O = ADP + phosphate + H(+). DEAD-box RNA helicase involved in RNA degradation. Has RNA-dependent ATPase activity and unwinds double-stranded RNA. This Enterobacter sp. (strain 638) protein is ATP-dependent RNA helicase RhlB.